The sequence spans 228 residues: MKLTFLGHSAFLLENQEVSLVIDPFLTGNPMAPHDIPVKPNYILVSHGHGDHLGDAIRLAKETSATIVSVFELANYCARQGVLTHPMHIGGSHNFGPMKVKLTQALHGNSTGSDRGPAEYLGNPCGFLIYLGNKTIYHAGDTGLFGDMQLIGDLNSIDVALLPIGDNFTMGPTDALEAVKMLKPQRVIPMHYNTWPLISQDPTAFKKAVEQATTTQVDILQPGEFLKI.

This sequence belongs to the UPF0173 family.

In Desulforamulus reducens (strain ATCC BAA-1160 / DSM 100696 / MI-1) (Desulfotomaculum reducens), this protein is UPF0173 metal-dependent hydrolase Dred_1740.